Reading from the N-terminus, the 255-residue chain is Leucyl/phenylalanyl-tRNA--protein transferase (255 aa).

This sequence belongs to the L/F-transferase family.

The protein localises to the cytoplasm. It carries out the reaction N-terminal L-lysyl-[protein] + L-leucyl-tRNA(Leu) = N-terminal L-leucyl-L-lysyl-[protein] + tRNA(Leu) + H(+). It catalyses the reaction N-terminal L-arginyl-[protein] + L-leucyl-tRNA(Leu) = N-terminal L-leucyl-L-arginyl-[protein] + tRNA(Leu) + H(+). The catalysed reaction is L-phenylalanyl-tRNA(Phe) + an N-terminal L-alpha-aminoacyl-[protein] = an N-terminal L-phenylalanyl-L-alpha-aminoacyl-[protein] + tRNA(Phe). Functions in the N-end rule pathway of protein degradation where it conjugates Leu, Phe and, less efficiently, Met from aminoacyl-tRNAs to the N-termini of proteins containing an N-terminal arginine or lysine. The chain is Leucyl/phenylalanyl-tRNA--protein transferase from Burkholderia pseudomallei (strain 668).